Here is a 183-residue protein sequence, read N- to C-terminus: uncharacterized protein (183 aa).

A Glycyl lysine isopeptide (Lys-Gly) (interchain with G-Cter in ubiquitin) cross-link involves residue Lys21. 2 disordered regions span residues 24–111 and 160–183; these read NTTT…QNDN and PQSI…TRRP. Residues 99–108 show a composition bias toward low complexity; sequence QQQQQQQQQQ. Positions 170–183 are enriched in polar residues; sequence LPPSNASNTTTRRP.

It localises to the cytoplasm. This is an uncharacterized protein from Saccharomyces cerevisiae (strain ATCC 204508 / S288c) (Baker's yeast).